The following is a 105-amino-acid chain: Oxytocin-neurophysin 1 (105 aa).

C1 and C6 are disulfide-bonded. G9 bears the Glycine amide mark. Cystine bridges form between C22/C66, C25/C39, C33/C56, C40/C46, C73/C85, C79/C97, and C86/C91.

The protein belongs to the vasopressin/oxytocin family. In terms of assembly, interacts with oxytocin receptor (Ki=1.5 nM). Interacts with vasopressin V1aR/AVPR1A (Ki=37 nM), V1bR/AVPR1B (Ki=222 nM), and V2R/AVPR2 receptors (Ki=823 nM).

It is found in the secreted. Its function is as follows. Neurophysin 1 specifically binds oxytocin. In terms of biological role, oxytocin causes contraction of the smooth muscle of the uterus and of the mammary gland. Acts by binding to oxytocin receptor (OXTR). In Equus caballus (Horse), this protein is Oxytocin-neurophysin 1 (OXT).